The primary structure comprises 183 residues: Extracellular superoxide dismutase [Cu-Zn] (183 aa).

The N-terminal stretch at 1–32 is a signal peptide; the sequence is MTMLQQILLISVIIGTVHVHEVDCANEVLKAR. N-linked (GlcNAc...) asparagine glycosylation is present at Asn-63. 3 residues coordinate Cu cation: His-77, His-79, and His-94. A disulfide bridge links Cys-88 with Cys-177. Zn(2+) contacts are provided by His-94, His-102, His-111, and Asp-114. A Cu cation-binding site is contributed by His-151.

It belongs to the Cu-Zn superoxide dismutase family. The cofactor is Cu cation. Requires Zn(2+) as cofactor.

The protein resides in the secreted. It is found in the extracellular space. The enzyme catalyses 2 superoxide + 2 H(+) = H2O2 + O2. Functionally, destroys radicals which are normally produced within the cells and which are toxic to biological systems. This chain is Extracellular superoxide dismutase [Cu-Zn] (SOD), found in Haemonchus contortus (Barber pole worm).